The following is a 55-amino-acid chain: Large ribosomal subunit protein bL33 (55 aa).

The span at 1–11 (MAKGSREKIKL) shows a compositional bias: basic and acidic residues. A disordered region spans residues 1–32 (MAKGSREKIKLESSASTGHFYTTSKNKRTKPE). Residues 13-24 (SSASTGHFYTTS) show a composition bias toward polar residues.

This sequence belongs to the bacterial ribosomal protein bL33 family.

The chain is Large ribosomal subunit protein bL33 from Polynucleobacter necessarius subsp. necessarius (strain STIR1).